The following is a 160-amino-acid chain: Cytochrome b6-f complex subunit 4 (160 aa).

The next 3 helical transmembrane spans lie at 36–56 (LLYIFPVVILGTIACNVGLAV), 95–115 (LLGVLLMVSVPAGLLTVPFLE), and 131–151 (TVFLIGTAVALWLGIGATLPI).

This sequence belongs to the cytochrome b family. PetD subfamily. In terms of assembly, the 4 large subunits of the cytochrome b6-f complex are cytochrome b6, subunit IV (17 kDa polypeptide, petD), cytochrome f and the Rieske protein, while the 4 small subunits are petG, petL, petM and petN. The complex functions as a dimer.

It is found in the plastid. The protein resides in the chloroplast thylakoid membrane. In terms of biological role, component of the cytochrome b6-f complex, which mediates electron transfer between photosystem II (PSII) and photosystem I (PSI), cyclic electron flow around PSI, and state transitions. The polypeptide is Cytochrome b6-f complex subunit 4 (Coffea arabica (Arabian coffee)).